We begin with the raw amino-acid sequence, 484 residues long: Palmitoyltransferase ZDHHC1 (484 aa).

Polar residues-rich tracts occupy residues 1-11 (MNICNKPSNKT) and 19-34 (TAPS…LQGQ). A disordered region spans residues 1-38 (MNICNKPSNKTAPEKSVWTAPSQDSGPSPELQGQRSRR). Over 1–49 (MNICNKPSNKTAPEKSVWTAPSQDSGPSPELQGQRSRRNGWSWPPHPLQ) the chain is Cytoplasmic. Residues 1–268 (MNICNKPSNK…GHLLCFHIYL (268 aa)) form a mediates interaction with STING1 region. Residues 50–70 (IVAWLLYLFFAVIGFGVLVPL) form a helical membrane-spanning segment. Topologically, residues 71-74 (LPHH) are lumenal. A helical transmembrane segment spans residues 75 to 95 (WVPAGYACMGAIFAGHLVVHL). Residues 96–182 (TAVSIDPADA…YRLFLHSVAS (87 aa)) lie on the Cytoplasmic side of the membrane. One can recognise a DHHC domain in the interval 131–181 (LHCNLCDVDVSARSKHCSACNKCVCGFDHHCKWLNNCVGERNYRLFLHSVA). Residue C161 is the S-palmitoyl cysteine intermediate of the active site. Residues 183–203 (ALLGVLLLVLVATYVFVEFFV) form a helical membrane-spanning segment. Residues 204–238 (NPMRLRTNQHFEVLKNHTDVWFVFLPAAPVETQAP) lie on the Lumenal side of the membrane. A helical transmembrane segment spans residues 239–259 (AILALAALLILLGLLSTALLG). Residues 260-484 (HLLCFHIYLM…GTPGGGDGLP (225 aa)) lie on the Cytoplasmic side of the membrane. Disordered stretches follow at residues 341–415 (TQGQ…VHAG) and 444–484 (LGAP…DGLP). Positions 364–374 (PQKKRKRRVYR) are enriched in basic residues. The span at 380-392 (VLDRELPLPRLRE) shows a compositional bias: basic and acidic residues. Residues 395 to 415 (TPSRRSSSSSDSTSASPVHAG) are compositionally biased toward low complexity. Over residues 475–484 (GTPGGGDGLP) the composition is skewed to gly residues.

It belongs to the DHHC palmitoyltransferase family. As to quaternary structure, interacts with STING1; ZDHHC1 constitutively interacts with STING1 and in presence of DNA viruses activates it by promoting its cGAMP-induced oligomerization and the recruitment of downstream signaling components. In terms of tissue distribution, expressed at high levels in fetal lung and heart. Expressed at lower levels in fetal liver and brain. Also detected in adult islet cells of pancreas, Leydig cells of testis, retina and molecular layer of cerebellum.

The protein localises to the endosome membrane. It localises to the endoplasmic reticulum membrane. The protein resides in the golgi apparatus. The enzyme catalyses L-cysteinyl-[protein] + hexadecanoyl-CoA = S-hexadecanoyl-L-cysteinyl-[protein] + CoA. In terms of biological role, palmitoyltransferase that catalyzes the addition of palmitate onto various protein substrates, such as NCDN and NLRP3. Has a palmitoyltransferase activity toward NCDN and regulates NCDN association with endosome membranes through this palmitoylation. Acts as an activator of the NLRP3 inflammasome by mediating palmitoylation of 'Cys-130' and 'Cys-958' of NLRP3, thereby promoting NLRP3 phosphorylation and activation by NEK7. Its function is as follows. Also has a palmitoyltransferase activity-independent function in DNA virus-triggered and CGAS-mediated innate immune response. Functions as an activator of STING1 by promoting its cGAMP-induced oligomerization and the recruitment of downstream signaling components. This chain is Palmitoyltransferase ZDHHC1, found in Mus musculus (Mouse).